A 104-amino-acid polypeptide reads, in one-letter code: Large ribosomal subunit protein uL24 (104 aa).

Belongs to the universal ribosomal protein uL24 family. In terms of assembly, part of the 50S ribosomal subunit.

In terms of biological role, one of two assembly initiator proteins, it binds directly to the 5'-end of the 23S rRNA, where it nucleates assembly of the 50S subunit. One of the proteins that surrounds the polypeptide exit tunnel on the outside of the subunit. The sequence is that of Large ribosomal subunit protein uL24 from Colwellia psychrerythraea (strain 34H / ATCC BAA-681) (Vibrio psychroerythus).